Consider the following 156-residue polypeptide: Small ribosomal subunit protein uS7 (156 aa).

It belongs to the universal ribosomal protein uS7 family. As to quaternary structure, part of the 30S ribosomal subunit. Contacts proteins S9 and S11.

Functionally, one of the primary rRNA binding proteins, it binds directly to 16S rRNA where it nucleates assembly of the head domain of the 30S subunit. Is located at the subunit interface close to the decoding center, probably blocks exit of the E-site tRNA. In Parafrankia sp. (strain EAN1pec), this protein is Small ribosomal subunit protein uS7.